A 471-amino-acid polypeptide reads, in one-letter code: PTS system mannitol-specific EIICB component (471 aa).

Topologically, residues 1–29 are cytoplasmic; the sequence is MTHTSENQAGFRVKIQRFGSYLSGMIMPN. One can recognise a PTS EIIC type-2 domain in the interval 18 to 342; sequence FGSYLSGMIM…FFVASIFLKS (325 aa). A helical membrane pass occupies residues 30–51; it reads IGAFIAWGIITALFIPTGWLPN. The Extracellular segment spans residues 52 to 55; sequence ETFA. A helical membrane pass occupies residues 56-76; the sequence is KLVGPMITYLLPLLIGYTGGK. Residues 77-139 are Cytoplasmic-facing; it reads MIYDVRGGVV…QGFEMLVNNF (63 aa). A helical transmembrane segment spans residues 140–161; that stretch reads SAGIIGGLLTLAAFKGVGPVVS. The Extracellular portion of the chain corresponds to 162–170; it reads AISKTLAAG. Residues 171 to 191 form a helical membrane-spanning segment; the sequence is VEKIVDLHLLPLANIFIEPGK. At 192-278 the chain is on the cytoplasmic side; sequence VLFLNNAINH…VLMRPILILA (87 aa). A helical membrane pass occupies residues 279-298; that stretch reads AIAGGVSGVLTFTIFDAGLV. Residues 299 to 318 lie on the Extracellular side of the membrane; it reads AVPSPGSIFALLAMTPKGNY. The chain crosses the membrane as a helical span at residues 319–340; the sequence is LGVLAGVLVATAVSFFVASIFL. The Cytoplasmic portion of the chain corresponds to 341–471; the sequence is KSAKNNEEDI…YDELIEMLKK (131 aa). Residues 383–471 enclose the PTS EIIB type-2 domain; it reads KKIVFACDAG…YDELIEMLKK (89 aa). The Phosphocysteine intermediate; for EIIB activity role is filled by Cys-389. Cys-389 carries the phosphocysteine; by EIIA modification.

Homodimer.

It localises to the cell membrane. It carries out the reaction D-mannitol(out) + N(pros)-phospho-L-histidyl-[protein] = D-mannitol 1-phosphate(in) + L-histidyl-[protein]. In terms of biological role, the phosphoenolpyruvate-dependent sugar phosphotransferase system (sugar PTS), a major carbohydrate active transport system, catalyzes the phosphorylation of incoming sugar substrates concomitantly with their translocation across the cell membrane. The enzyme II CmtAB PTS system is involved in D-mannitol transport. This is PTS system mannitol-specific EIICB component from Geobacillus stearothermophilus (Bacillus stearothermophilus).